The chain runs to 60 residues: Large ribosomal subunit protein bL32 (60 aa).

The segment covering Met-1–Arg-16 has biased composition (basic residues). The disordered stretch occupies residues Met-1 to Gly-34.

Belongs to the bacterial ribosomal protein bL32 family.

The polypeptide is Large ribosomal subunit protein bL32 (Maricaulis maris (strain MCS10) (Caulobacter maris)).